Reading from the N-terminus, the 193-residue chain is Protein hunchback (193 aa).

2 disordered regions span residues 16-126 and 146-193; these read SHHH…ATTT and SNDK…KYMA. Residues 17 to 31 show a composition bias toward basic residues; it reads HHHHHHHAHHSHHQH. Composition is skewed to low complexity over residues 35-46 and 56-77; these read SNSNSNASSPHQ and SSNNLQLEQYLKQQQQQQQQQQ. Polar residues predominate over residues 89-99; that stretch reads PSPSNNDQNSR. Residues 174–193 are compositionally biased toward basic and acidic residues; sequence EPEKEHDLMSNSSEDMKYMA.

It belongs to the hunchback C2H2-type zinc-finger protein family.

It localises to the nucleus. Its function is as follows. Gap class segmentation protein that controls development of head structures. The chain is Protein hunchback (hb) from Drosophila iki (Fruit fly).